Consider the following 435-residue polypeptide: Serine/threonine-protein kinase 40 (435 aa).

Residues 35–332 enclose the Protein kinase domain; it reads FVLGPRLGNS…DVLEALSAII (298 aa). Residues 41–49 and lysine 66 contribute to the ATP site; that span reads LGNSPVPSI. Aspartate 197 acts as the Proton acceptor in catalysis.

Belongs to the protein kinase superfamily. CAMK Ser/Thr protein kinase family.

Its subcellular location is the nucleus. The protein localises to the cytoplasm. The catalysed reaction is L-seryl-[protein] + ATP = O-phospho-L-seryl-[protein] + ADP + H(+). The enzyme catalyses L-threonyl-[protein] + ATP = O-phospho-L-threonyl-[protein] + ADP + H(+). May be a negative regulator of NF-kappa-B and p53-mediated gene transcription. This Mus musculus (Mouse) protein is Serine/threonine-protein kinase 40 (Stk40).